We begin with the raw amino-acid sequence, 593 residues long: NADH-quinone oxidoreductase subunit C/D (593 aa).

Residues Met1 to Gln184 are NADH dehydrogenase I subunit C. The tract at residues Asp208–Arg593 is NADH dehydrogenase I subunit D.

The protein in the N-terminal section; belongs to the complex I 30 kDa subunit family. It in the C-terminal section; belongs to the complex I 49 kDa subunit family. As to quaternary structure, NDH-1 is composed of 13 different subunits. Subunits NuoB, CD, E, F, and G constitute the peripheral sector of the complex.

The protein localises to the cell inner membrane. It carries out the reaction a quinone + NADH + 5 H(+)(in) = a quinol + NAD(+) + 4 H(+)(out). NDH-1 shuttles electrons from NADH, via FMN and iron-sulfur (Fe-S) centers, to quinones in the respiratory chain. The immediate electron acceptor for the enzyme in this species is believed to be ubiquinone. Couples the redox reaction to proton translocation (for every two electrons transferred, four hydrogen ions are translocated across the cytoplasmic membrane), and thus conserves the redox energy in a proton gradient. The chain is NADH-quinone oxidoreductase subunit C/D from Pseudomonas putida (strain ATCC 700007 / DSM 6899 / JCM 31910 / BCRC 17059 / LMG 24140 / F1).